The sequence spans 388 residues: tRNA 2-selenouridine synthase (388 aa).

The 124-residue stretch at 15 to 138 (FTADTPLIDV…ARQFLINTID (124 aa)) folds into the Rhodanese domain. The active-site S-selanylcysteine intermediate is Cys98.

The protein belongs to the SelU family. In terms of assembly, monomer.

The enzyme catalyses 5-methylaminomethyl-2-thiouridine(34) in tRNA + selenophosphate + (2E)-geranyl diphosphate + H2O + H(+) = 5-methylaminomethyl-2-selenouridine(34) in tRNA + (2E)-thiogeraniol + phosphate + diphosphate. It carries out the reaction 5-methylaminomethyl-2-thiouridine(34) in tRNA + (2E)-geranyl diphosphate = 5-methylaminomethyl-S-(2E)-geranyl-thiouridine(34) in tRNA + diphosphate. The catalysed reaction is 5-methylaminomethyl-S-(2E)-geranyl-thiouridine(34) in tRNA + selenophosphate + H(+) = 5-methylaminomethyl-2-(Se-phospho)selenouridine(34) in tRNA + (2E)-thiogeraniol. It catalyses the reaction 5-methylaminomethyl-2-(Se-phospho)selenouridine(34) in tRNA + H2O = 5-methylaminomethyl-2-selenouridine(34) in tRNA + phosphate. Involved in the post-transcriptional modification of the uridine at the wobble position (U34) of tRNA(Lys), tRNA(Glu) and tRNA(Gln). Catalyzes the conversion of 2-thiouridine (S2U-RNA) to 2-selenouridine (Se2U-RNA). Acts in a two-step process involving geranylation of 2-thiouridine (S2U) to S-geranyl-2-thiouridine (geS2U) and subsequent selenation of the latter derivative to 2-selenouridine (Se2U) in the tRNA chain. The sequence is that of tRNA 2-selenouridine synthase from Nitrosomonas eutropha (strain DSM 101675 / C91 / Nm57).